A 216-amino-acid polypeptide reads, in one-letter code: Adenylate kinase (216 aa).

10 to 15 contacts ATP; the sequence is GAGKGT. The NMP stretch occupies residues 30-59; the sequence is STGDILRENVKKGTALGLKAKSYMDKGELV. AMP-binding positions include Thr-31, Arg-36, 57–59, 85–88, and Gln-92; these read ELV and GFPR. The tract at residues 126–163 is LID; that stretch reads GRRICRSCGASYHLVFNPPKAKDLCDSCGGELYQRDDD. Arg-127 contacts ATP. Residues Cys-130 and Cys-133 each contribute to the Zn(2+) site. Residue 136–137 participates in ATP binding; it reads SY. The Zn(2+) site is built by Cys-150 and Cys-153. Residues Arg-160 and Arg-171 each coordinate AMP. Lys-199 is a binding site for ATP.

This sequence belongs to the adenylate kinase family. Monomer.

The protein resides in the cytoplasm. The enzyme catalyses AMP + ATP = 2 ADP. The protein operates within purine metabolism; AMP biosynthesis via salvage pathway; AMP from ADP: step 1/1. Its function is as follows. Catalyzes the reversible transfer of the terminal phosphate group between ATP and AMP. Plays an important role in cellular energy homeostasis and in adenine nucleotide metabolism. This chain is Adenylate kinase, found in Methanocella arvoryzae (strain DSM 22066 / NBRC 105507 / MRE50).